Consider the following 584-residue polypeptide: MSVRYSSSKHYSSSRSGGGGGGGGCGGGGGVSSLRISSSKGSLGGGFSSGGFSGGSFSRGSSGGGCFGGSSGGYGGLGGFGGGSFRGSYGSSSFGGSYGGIFGGGSFGGGSFGGGSFGGGGFGGGGFGGGFGGGFGGDGGLLSGNEKVTMQNLNDRLASYLDKVRALEESNYELEGKIKEWYEKHGNSHQGEPRDYSKYYKTIDDLKNQILNLTTDNANILLQIDNARLAADDFRLKYENEVALRQSVEADINGLRRVLDELTLTKADLEMQIESLTEELAYLKKNHEEEMKDLRNVSTGDVNVEMNAAPGVDLTQLLNNMRSQYEQLAEQNRKDAEAWFNEKSKELTTEIDNNIEQISSYKSEITELRRNVQALEIELQSQLALKQSLEASLAETEGRYCVQLSQIQAQISALEEQLQQIRAETECQNTEYQQLLDIKIRLENEIQTYRSLLEGEGSSGGGGRGGGSFGGGYGGGSSGGGSSGGGHGGGHGGSSGGGYGGGSSGGGSSGGGYGGGSSSGGHGGSSSGGYGGGSSGGGGGGYGGGSSGGGSSSGGGYGGGSSSGGHKSSSSGSVGESSSKGPRY.

The segment covering 1–15 has biased composition (low complexity); it reads MSVRYSSSKHYSSSR. Residues 1-24 form a disordered region; it reads MSVRYSSSKHYSSSRSGGGGGGGG. Residues 1-145 are head; that stretch reads MSVRYSSSKH…GGDGGLLSGN (145 aa). Phosphoserine is present on residues Ser-14, Ser-16, Ser-42, Ser-53, Ser-56, and Ser-170. The segment at 146–181 is coil 1A; sequence EKVTMQNLNDRLASYLDKVRALEESNYELEGKIKEW. One can recognise an IF rod domain in the interval 146 to 460; that stretch reads EKVTMQNLND…SLLEGEGSSG (315 aa). Residues 182–202 are linker 1; sequence YEKHGNSHQGEPRDYSKYYKT. The interval 203–294 is coil 1B; sequence IDDLKNQILN…KNHEEEMKDL (92 aa). The interval 295–317 is linker 12; it reads RNVSTGDVNVEMNAAPGVDLTQL. Residues 318 to 456 form a coil 2 region; it reads LNNMRSQYEQ…QTYRSLLEGE (139 aa). Positions 453–584 are disordered; that stretch reads LEGEGSSGGG…GESSSKGPRY (132 aa). Positions 457-563 are enriched in gly residues; the sequence is GSSGGGGRGG…GGGYGGGSSS (107 aa). The tract at residues 457–584 is tail; it reads GSSGGGGRGG…GESSSKGPRY (128 aa). The span at 564–584 shows a compositional bias: low complexity; sequence GGHKSSSSGSVGESSSKGPRY.

It belongs to the intermediate filament family. In terms of assembly, heterotetramer of two type I and two type II keratins. Heterodimer with KRT1. Two heterodimers of KRT1 and KRT10 form a heterotetramer. The KRT10 subunit in the heterotetramer is probably disulfide-linked. Interacts with PLEC isoform 1C, when in a heterodimer with KRT1. As to quaternary structure, (Microbial infection) Interacts (via C-terminal tail domain) with the S.aureus clumping factor, clfB; this interaction probably mediates S.aureus attachment to the keratinized squamous epithelial cells from the nasal cavity. (Microbial infection) Interacts (via the C-terminal tail domain) with S.pneumoniae serine-rich repeat protein PsrP; this interaction probably mediates S.pneumoniae adherence to lung tissue and subsequent pathogenesis. Neither protein has to be glycosylated for the interaction to occur. In terms of tissue distribution, seen in all suprabasal cell layers including stratum corneum. Expressed on the surface of lung cell lines. Localized on the surface of desquamated nasal epithelial cells (at protein level).

The protein localises to the secreted. It localises to the extracellular space. Its subcellular location is the cell surface. It is found in the cytoplasm. In terms of biological role, plays a role in the establishment of the epidermal barrier on plantar skin. Involved in the maintenance of cell layer development and keratin filament bundles in suprabasal cells of the epithelium. Its function is as follows. (Microbial infection) Acts as a mediator of S.aureus adherence to desquamated nasal epithelial cells via clfB, and hence may play a role in nasal colonization. Functionally, (Microbial infection) Binds S.pneumoniae PsrP, mediating adherence of the bacteria to lung cell lines. Reduction of levels of KRT10 keratin decrease adherence, overexpression increases adherence. Neither protein has to be glycosylated for the interaction to occur. The polypeptide is Keratin, type I cytoskeletal 10 (KRT10) (Homo sapiens (Human)).